The chain runs to 479 residues: Protein C-ets-2 (479 aa).

In terms of domain architecture, PNT spans 88 to 173 (DTFSGFTKEQ…EHLEQMIKDS (86 aa)). A DNA-binding region (ETS) is located at residues 373 to 453 (IQLWQFLLEL…SGKRYVYRFV (81 aa)).

This sequence belongs to the ETS family.

It is found in the nucleus. Its function is as follows. Probable transcription factor. The protein is Protein C-ets-2 (ETS2) of Gallus gallus (Chicken).